The chain runs to 481 residues: Proline--tRNA ligase (481 aa).

It belongs to the class-II aminoacyl-tRNA synthetase family. ProS type 3 subfamily. Homodimer.

Its subcellular location is the cytoplasm. The enzyme catalyses tRNA(Pro) + L-proline + ATP = L-prolyl-tRNA(Pro) + AMP + diphosphate. Functionally, catalyzes the attachment of proline to tRNA(Pro) in a two-step reaction: proline is first activated by ATP to form Pro-AMP and then transferred to the acceptor end of tRNA(Pro). The chain is Proline--tRNA ligase from Chlorobium chlorochromatii (strain CaD3).